Here is a 128-residue protein sequence, read N- to C-terminus: Large ribosomal subunit protein bL12 (128 aa).

This sequence belongs to the bacterial ribosomal protein bL12 family. Homodimer. Part of the ribosomal stalk of the 50S ribosomal subunit. Forms a multimeric L10(L12)X complex, where L10 forms an elongated spine to which 2 to 4 L12 dimers bind in a sequential fashion. Binds GTP-bound translation factors.

Forms part of the ribosomal stalk which helps the ribosome interact with GTP-bound translation factors. Is thus essential for accurate translation. The protein is Large ribosomal subunit protein bL12 of Synechococcus sp. (strain CC9902).